Consider the following 434-residue polypeptide: Ribosomal protein uS12 methylthiotransferase RimO (434 aa).

The region spanning 2-112 is the MTTase N-terminal domain; that stretch reads AKIGFVSLGC…VLEAVQVVLP (111 aa). Positions 11, 47, 76, 142, 146, and 149 each coordinate [4Fe-4S] cluster. Residues 128 to 365 form the Radical SAM core domain; it reads LTPRHYAYVK…LELQARVSLR (238 aa). The TRAM domain occupies 368-434; sequence QRFVGKTLEV…DTYDLHGVQA (67 aa).

It belongs to the methylthiotransferase family. RimO subfamily. [4Fe-4S] cluster is required as a cofactor.

It localises to the cytoplasm. It catalyses the reaction L-aspartate(89)-[ribosomal protein uS12]-hydrogen + (sulfur carrier)-SH + AH2 + 2 S-adenosyl-L-methionine = 3-methylsulfanyl-L-aspartate(89)-[ribosomal protein uS12]-hydrogen + (sulfur carrier)-H + 5'-deoxyadenosine + L-methionine + A + S-adenosyl-L-homocysteine + 2 H(+). In terms of biological role, catalyzes the methylthiolation of an aspartic acid residue of ribosomal protein uS12. This Thermus thermophilus (strain ATCC 27634 / DSM 579 / HB8) protein is Ribosomal protein uS12 methylthiotransferase RimO.